We begin with the raw amino-acid sequence, 1073 residues long: Probable nuclear hormone receptor HR38 (1073 aa).

Disordered regions lie at residues 55-87 (NLNA…LPPP), 150-185 (TPAP…SNCD), 263-326 (TQTA…LVSP), 437-458 (ALHA…QQHQ), 492-514 (KYNS…APTP), 529-579 (PPLS…NSGG), and 618-640 (GQQQ…NGER). 3 stretches are compositionally biased toward low complexity: residues 59-82 (PTHQ…QQHP), 175-185 (DSNSDSNSNCD), and 263-277 (TQTA…ASAA). Residues 279 to 291 (HHQHHNHLLHQQH) show a composition bias toward basic residues. 3 stretches are compositionally biased toward low complexity: residues 292–326 (HNQQ…LVSP), 441–458 (QQQQ…QQHQ), and 495–514 (SSSG…APTP). Low complexity predominate over residues 619–636 (QQQQQQQQSYQQHNYNSH). Residues 741–816 (SQLCAVCGDT…VGMVKEVVRT (76 aa)) constitute a DNA-binding region (nuclear receptor). 2 consecutive NR C4-type zinc fingers follow at residues 744–764 (CAVC…CEGC) and 780–804 (CLAD…FQKC). The interval 819–841 (LKGRRGRLPSKPKSPQESPPSPP) is disordered. An NR LBD domain is found at 840–1070 (PPISLITALV…ALIENMFVTT (231 aa)).

Belongs to the nuclear hormone receptor family. NR4 subfamily. Forms a heterodimer with USP. Ubiquitously expressed in preblastoderm embryos, specifically in central nervous system and intestinal tract. Highly expressed in third instar larval imaginal disks and brain complexes, but not in ovaries.

The protein resides in the nucleus. Its function is as follows. Binds to NGFI-B response elements. Plays an important role in late stages of epidermal metamorphosis. This is Probable nuclear hormone receptor HR38 (Hr38) from Drosophila melanogaster (Fruit fly).